We begin with the raw amino-acid sequence, 343 residues long: Phosphoribosylformylglycinamidine cyclo-ligase (343 aa).

The protein belongs to the AIR synthase family.

It is found in the cytoplasm. It catalyses the reaction 2-formamido-N(1)-(5-O-phospho-beta-D-ribosyl)acetamidine + ATP = 5-amino-1-(5-phospho-beta-D-ribosyl)imidazole + ADP + phosphate + H(+). The protein operates within purine metabolism; IMP biosynthesis via de novo pathway; 5-amino-1-(5-phospho-D-ribosyl)imidazole from N(2)-formyl-N(1)-(5-phospho-D-ribosyl)glycinamide: step 2/2. The sequence is that of Phosphoribosylformylglycinamidine cyclo-ligase from Carboxydothermus hydrogenoformans (strain ATCC BAA-161 / DSM 6008 / Z-2901).